A 1551-amino-acid chain; its full sequence is Serine/threonine-protein kinase MRCK gamma (1551 aa).

The Protein kinase domain maps to 71–337 (FEILKVIGRG…LDDFRKHPFF (267 aa)). ATP contacts are provided by residues 77 to 85 (IGRGAFGEV) and Lys100. Asp195 (proton acceptor) is an active-site residue. Residues Ser216 and Ser228 each carry the phosphoserine; by autocatalysis modification. Thr234 carries the post-translational modification Phosphothreonine; by autocatalysis. The AGC-kinase C-terminal domain occupies 338 to 408 (EGVDWERLAT…TSGSPFDVQS (71 aa)). Coiled coils occupy residues 442–675 (QPQE…TESN) and 729–801 (KARR…QARG). Positions 578-605 (QESSQAKTVHAAPETNGIGSPEGQSQEA) are disordered. The segment at 820–886 (TEKDSAKDPG…SHTLRPRSFP (67 aa)) is disordered. Basic and acidic residues predominate over residues 839–849 (AEAELRPEGRR). The Phorbol-ester/DAG-type zinc-finger motif lies at 877–926 (SHTLRPRSFPSPTKCLRCTSLMLGLGRQGLGCDTCGYFCHSACASQAPPC). The 120-residue stretch at 946-1065 (GTAYEGFLSV…WLQVLGELQR (120 aa)) folds into the PH domain. The CNH domain occupies 1091-1365 (LPHALCAAVI…RPLNPEGSLF (275 aa)). The region spanning 1436-1449 (ISPPTNFNHLVHVG) is the CRIB domain. The tract at residues 1441-1551 (NFNHLVHVGP…PPDPESESSP (111 aa)) is disordered. The segment covering 1455-1468 (PNTRDGTRAQEQKS) has biased composition (basic and acidic residues). Ser1481 bears the Phosphoserine mark. Over residues 1511 to 1527 (TSLSSESVSCPQGSLSP) the composition is skewed to polar residues.

This sequence belongs to the protein kinase superfamily. AGC Ser/Thr protein kinase family. DMPK subfamily. Homodimer and homotetramer via the coiled coil regions. Interacts tightly with GTP-bound but not GDP-bound CDC42. It depends on Mg(2+) as a cofactor.

Its subcellular location is the cytoplasm. It catalyses the reaction L-seryl-[protein] + ATP = O-phospho-L-seryl-[protein] + ADP + H(+). The enzyme catalyses L-threonyl-[protein] + ATP = O-phospho-L-threonyl-[protein] + ADP + H(+). Its activity is regulated as follows. Maintained in an inactive, closed conformation by an interaction between the kinase domain and the negative autoregulatory C-terminal coiled-coil region. Agonist binding to the phorbol ester binding site disrupts this, releasing the kinase domain to allow N-terminus-mediated dimerization and kinase activation by transautophosphorylation. May act as a downstream effector of CDC42 in cytoskeletal reorganization. Contributes to the actomyosin contractility required for cell invasion, through the regulation of MYPT1 and thus MLC2 phosphorylation. This is Serine/threonine-protein kinase MRCK gamma from Mus musculus (Mouse).